The sequence spans 540 residues: CBL-interacting protein kinase 12 (540 aa).

The interval 1 to 23 is disordered; that stretch reads MLMATVSPARREPTPQAVRASPM. A Protein kinase domain is found at 46-300; the sequence is YELGRVLGQG…VPEIIESDWF (255 aa). ATP contacts are provided by residues 52 to 60 and Lys-75; that span reads LGQGSFAKV. Asp-168 acts as the Proton acceptor in catalysis. The segment at 186–215 is activation loop; it reads DFGLAAGPDQFDPDGLLHTFCGTPAYVAPE. A compositionally biased stretch (pro residues) spans 333–348; sequence PPPLGLAPPVPPPPQG. The tract at residues 333–380 is disordered; the sequence is PPPLGLAPPVPPPPQGDDPDGSGSESDSSVVSCPATLSTGESQRVRGS. Low complexity predominate over residues 353 to 364; the sequence is GSGSESDSSVVS. In terms of domain architecture, NAF spans 370-406; it reads STGESQRVRGSLPRPASLNAFDIISFSKGFNLSGLFE. Residues 409-438 form a PPI region; that stretch reads GNEIRFVSGEPMSDIVKKLEEIAKVKSFTV.

Belongs to the protein kinase superfamily. CAMK Ser/Thr protein kinase family. SNF1 subfamily. Mg(2+) serves as cofactor. Autophosphorylated. In terms of tissue distribution, expressed at low levels in leaf blades.

The catalysed reaction is L-seryl-[protein] + ATP = O-phospho-L-seryl-[protein] + ADP + H(+). It catalyses the reaction L-threonyl-[protein] + ATP = O-phospho-L-threonyl-[protein] + ADP + H(+). Its function is as follows. Involved in drought stress tolerance. CIPK serine-threonine protein kinases interact with CBL proteins. Binding of a CBL protein to the regulatory NAF domain of CIPK protein lead to the activation of the kinase in a calcium-dependent manner. The chain is CBL-interacting protein kinase 12 (CIPK12) from Oryza sativa subsp. japonica (Rice).